Here is a 210-residue protein sequence, read N- to C-terminus: Ribulose-phosphate 3-epimerase (210 aa).

Residue Ser-9 coordinates substrate. The a divalent metal cation site is built by His-34, Asp-36, and His-68. The Proton acceptor role is filled by Asp-36. Residues His-68, Gly-144 to Gly-147, Asp-177 to Gly-179, and Gly-199 to Ser-200 each bind substrate. Residue Asp-177 participates in a divalent metal cation binding. Residue Asp-177 is the Proton donor of the active site.

The protein belongs to the ribulose-phosphate 3-epimerase family. Requires a divalent metal cation as cofactor.

It carries out the reaction D-ribulose 5-phosphate = D-xylulose 5-phosphate. It participates in carbohydrate degradation. Its function is as follows. Catalyzes the reversible epimerization of D-ribulose 5-phosphate to D-xylulose 5-phosphate. The sequence is that of Ribulose-phosphate 3-epimerase from Serratia marcescens.